The primary structure comprises 724 residues: Disks large homolog 4 (724 aa).

Residues Cys-3 and Cys-5 are each lipidated (S-palmitoyl cysteine). The tract at residues Gln-15 to Ser-35 is disordered. 2 consecutive PDZ domains span residues Glu-65–Arg-151 and Glu-160–Pro-246. A phosphoserine mark is found at Ser-73 and Ser-142. Tyr-240 carries the post-translational modification Phosphotyrosine. Ser-295 is subject to Phosphoserine. The PDZ 3 domain maps to Arg-313–Lys-393. Phosphoserine occurs at positions 415 and 418. Thr-420 is modified (phosphothreonine). 4 positions are modified to phosphoserine: Ser-422, Ser-425, Ser-449, and Ser-480. The SH3 domain maps to Lys-428–Glu-498. In terms of domain architecture, Guanylate kinase-like spans Ala-534–Glu-709. Phosphotyrosine is present on Tyr-580. Phosphoserine occurs at positions 606 and 654. Phosphotyrosine is present on Tyr-715.

This sequence belongs to the MAGUK family. As to quaternary structure, interacts through its PDZ domains with ANO2 and NETO1. Interacts with KCNJ4. Interacts through its first two PDZ domains with GRIN2A, GRIN2B, GRIN2C and GRIN2D. Interacts with ERBB4. Interacts with KCNA1, KCNA2, KCNA3 and KCNA4. Interacts with LRRC4 and LRRC4B. Interacts with SYNGAP1. Interacts with ASIC3. Interacts with SEMA4C. Interacts with CXADR. Interacts with KCND2. Interacts (via first PDZ domain) with CRIPT. Interacts through its first PDZ domain with GRIK2 and KCNA4. Interacts through its second PDZ domain with the PDZ domain of NOS1 or the C-terminus of CAPON. Interacts through its third PDZ domain with NLGN1 and CRIPT, and probably with NLGN2 and NLGN3. Interacts through its guanylate kinase-like domain with DLGAP1/GKAP, DLGAP2, DLGAP3, DLGAP4, MAP1A, BEGAIN and SIPA1L1. Interacts through its guanylate kinase-like domain with KIF13B. Isoform 2 interacts through an L27 domain with HGS/HRS and the first L27 domain of CASK. Interacts with ANKS1B. Interacts with ADR1B. May interact with HTR2A. Interacts with ADAM22, KLHL17 and LGI1. Interacts with FRMPD4 (via C-terminus). Interacts with LRFN1 and LRFN2. Interacts with LRFN4. Interacts (via N-terminal tandem pair of PDZ domains) with GPER1 (via C-terminus tail motif); the interaction is direct and induces the increase of GPER1 protein levels residing at the plasma membrane surface in a estradiol-independent manner. Interacts (via N-terminus tandem pair of PDZ domains) with NOS1 (via N-terminal domain). Interacts with SHANK3. Interacts with GPR85. Interacts with CACNG2 and MPP2 (via the SH3-Guanylate kinase-like sub-module). Interacts with ADGRB1. Found in a complex with PRR7 and GRIN1. Interacts (via PDZ3 domain and to lesser degree via PDZ2 domain) with PRR7. Component of the postsynaptic hippocampal AMPA-type glutamate receptor (AMPAR) complex, at least composed of pore forming AMPAR subunits GRIA1, GRIA2 and GRIA3 and AMPAR auxiliary proteins SHISA6 and SHISA7. Interacts (via its first two PDZ domains) with SHISA6 and SHISA7 (via PDZ-binding motif); the interaction is direct. Interacts (via PDZ domain 2) with SEMA4F (via PDZ-binding motif); this interaction may promote translocation of DLG4/SAP90 to the membrane. Interacts with RPH3A and GRIN2A; this ternary complex regulates NMDA receptor composition at postsynaptic membranes. Interacts with ABR and BCR. Interacts with DGKI (via PDZ-binding motif); controls the localization of DGKI to the synapse. Interacts with C9orf72, SMCR8 and RAB39B. Interacts with ZDHHC5. Interacts with PTEN (via PDZ domain-binding motif); the interaction is induced by NMDA and is required for PTEN location at postsynaptic density. Found in a complex with GRIA1, GRIA2, GRIA3, GRIA4, CACNG8 and CNIH2. Interacts with FAM81A; the interaction facilitates condensate formation via liquid-liquid phase separation. Interacts with ADGRL3. Interacts with SORCS3. Post-translationally, palmitoylated. Palmitoylation is required for targeting to postsynaptic density, plasma membrane and synapses. Palmitoylation by ZDHHC2 occurs when the synaptic activity decreases and induces DLG4 synaptic clustering. Palmitoylation by ZDHHC15 regulates trafficking to the postsynaptic density and function in synaptogenesis. Palmitoylation may play a role in glutamate receptor GRIA1 synapse clustering. Depalmitoylated by ABHD17A and ABHD17B and to a lesser extent by ABHD17C, ABHD12, ABHD13, LYPLA1 and LYPLA2. Undergoes rapid synaptic palmitoylation/depalmitoylation cycle during neuronal development which slows down in mature neurons. In terms of processing, ubiquitinated by MDM2 in response to NMDA receptor activation, leading to proteasome-mediated degradation of DLG4 which is required for AMPA receptor endocytosis. As to expression, expressed in brain (at protein level). Detected in juxtaparanodal zones in the central nervous system and at nerve terminal plexuses of basket cells in the cerebellum. Expressed in cerebrum. Expressed in hippocampal neurons (at protein level). Isoform 1 and isoform 2: highly expressed in cerebellum, cortex, hippocampus, and corpus striatum.

Its subcellular location is the cell membrane. It is found in the postsynaptic density. The protein localises to the synapse. It localises to the cytoplasm. The protein resides in the cell projection. Its subcellular location is the axon. It is found in the dendritic spine. The protein localises to the dendrite. It localises to the presynapse. In terms of biological role, postsynaptic scaffolding protein that plays a critical role in synaptogenesis and synaptic plasticity by providing a platform for the postsynaptic clustering of crucial synaptic proteins. Interacts with the cytoplasmic tail of NMDA receptor subunits and shaker-type potassium channels. Required for synaptic plasticity associated with NMDA receptor signaling. Overexpression or depletion of DLG4 changes the ratio of excitatory to inhibitory synapses in hippocampal neurons. May reduce the amplitude of ASIC3 acid-evoked currents by retaining the channel intracellularly. May regulate the intracellular trafficking of ADR1B. Also regulates AMPA-type glutamate receptor (AMPAR) immobilization at postsynaptic density keeping the channels in an activated state in the presence of glutamate and preventing synaptic depression. Under basal conditions, cooperates with FYN to stabilize palmitoyltransferase ZDHHC5 at the synaptic membrane through FYN-mediated phosphorylation of ZDHHC5 and its subsequent inhibition of association with endocytic proteins. The sequence is that of Disks large homolog 4 from Rattus norvegicus (Rat).